The sequence spans 259 residues: Caffeoyl-CoA O-methyltransferase 1 (259 aa).

Residues 1 to 14 (MATTTTEATKTSST) are compositionally biased toward low complexity. The interval 1–29 (MATTTTEATKTSSTNGEDQKQSQNLRHQE) is disordered. N-acetylalanine is present on Ala2. Lys33 provides a ligand contact to substrate. Residues Thr75, Glu97, 99–100 (GV), Ser105, Asp123, and Ala152 each bind S-adenosyl-L-methionine. Asp175 contacts substrate. Residue Asp175 participates in a divalent metal cation binding. Residue Asp177 coordinates S-adenosyl-L-methionine. Residues Asp201 and Asn202 each coordinate a divalent metal cation. Position 206 (Asn206) interacts with substrate.

This sequence belongs to the class I-like SAM-binding methyltransferase superfamily. Cation-dependent O-methyltransferase family. CCoAMT subfamily. A divalent metal cation serves as cofactor. Expressed in stems and roots. Detected in leaves, siliques, flower buds, flowers. Expressed in the tapetum, but not in the endothecium. Detected in the vascular system of leaves and all flower organs, including stigma, stamens, petals and sepals.

The catalysed reaction is (E)-caffeoyl-CoA + S-adenosyl-L-methionine = (E)-feruloyl-CoA + S-adenosyl-L-homocysteine + H(+). It participates in aromatic compound metabolism; phenylpropanoid biosynthesis. Its function is as follows. Methylates caffeoyl-CoA to feruloyl-CoA. Has a very low activity with caffeic acid and esculetin. Involved in scopoletin biosynthesis in roots. The polypeptide is Caffeoyl-CoA O-methyltransferase 1 (CCOAOMT1) (Arabidopsis thaliana (Mouse-ear cress)).